The primary structure comprises 162 residues: Peptidyl-prolyl cis-trans isomerase (162 aa).

The 157-residue stretch at 5 to 161 (FFDVQFGGDA…TTIKIVDSGV (157 aa)) folds into the PPIase cyclophilin-type domain.

It belongs to the cyclophilin-type PPIase family. PPIase A subfamily.

The enzyme catalyses [protein]-peptidylproline (omega=180) = [protein]-peptidylproline (omega=0). With respect to regulation, binds cyclosporin A (CsA). CsA mediates some of its effects via an inhibitory action on PPIase. In terms of biological role, PPIases accelerate the folding of proteins. It catalyzes the cis-trans isomerization of proline imidic peptide bonds in oligopeptides. The protein is Peptidyl-prolyl cis-trans isomerase of Paramecium primaurelia.